The following is a 530-amino-acid chain: UDP-glucuronosyltransferase 2B7 (530 aa).

The signal sequence occupies residues 1 to 17; sequence MPQKWISALLLLQISFC. N-linked (GlcNAc...) asparagine glycosylation is present at Asn-316. Residues 374 to 380 and Glu-400 contribute to the UDP-alpha-D-glucuronate site; that span reads THGGANG. Residues 496-516 form a helical membrane-spanning segment; the sequence is IGFLLACVLAIVLLAVKCCLF.

It belongs to the UDP-glycosyltransferase family.

It localises to the endoplasmic reticulum membrane. It catalyses the reaction glucuronate acceptor + UDP-alpha-D-glucuronate = acceptor beta-D-glucuronoside + UDP + H(+). It carries out the reaction 17alpha-estradiol + UDP-alpha-D-glucuronate = 17alpha-estradiol 17-O-(beta-D-glucuronate) + UDP + H(+). The enzyme catalyses 17beta-estradiol + UDP-alpha-D-glucuronate = 17beta-estradiol 17-O-(beta-D-glucuronate) + UDP + H(+). The catalysed reaction is 2-hydroxy-17beta-estradiol + UDP-alpha-D-glucuronate = 2-hydroxy-17beta-estradiol 3-O-(beta-D-glucuronate) + UDP + H(+). It catalyses the reaction 4-hydroxy-17beta-estradiol + UDP-alpha-D-glucuronate = 17beta-estradiol 4-O-(beta-D-glucuronate) + UDP + H(+). It carries out the reaction 4-hydroxyestrone + UDP-alpha-D-glucuronate = estrone 4-O-(beta-D-glucuronate) + UDP + H(+). The enzyme catalyses 16alpha-hydroxyestrone + UDP-alpha-D-glucuronate = 16alpha-hydroxyestrone 16-O-(beta-D-glucuronate) + UDP + H(+). The catalysed reaction is 16alpha,17beta-estriol + UDP-alpha-D-glucuronate = 16alpha,17beta-estriol 16-O-(beta-D-glucuronate) + UDP + H(+). It catalyses the reaction 16beta,17beta-estriol + UDP-alpha-D-glucuronate = 16beta,17beta-estriol 16-O-(beta-D-glucuronate) + UDP + H(+). It carries out the reaction 16alpha,17alpha-estriol + UDP-alpha-D-glucuronate = 16alpha,17alpha-estriol 16-O-(beta-D-glucuronate) + UDP + H(+). The enzyme catalyses 16alpha,17alpha-estriol + UDP-alpha-D-glucuronate = 16alpha,17alpha-estriol 17-O-(beta-D-glucuronate) + UDP + H(+). The catalysed reaction is epitestosterone + UDP-alpha-D-glucuronate = epitestosterone 17-O-(beta-D-glucuronate) + UDP + H(+). It catalyses the reaction hyodeoxycholate + UDP-alpha-D-glucuronate = hyodeoxycholate 6-O-(beta-D-glucuronate) + UDP + H(+). It carries out the reaction hyocholate + UDP-alpha-D-glucuronate = hyocholate 6-O-(beta-D-glucuronate) + UDP + H(+). The enzyme catalyses all-trans-retinoate + UDP-alpha-D-glucuronate = all-trans-retinoyl-1-O-(beta-D-glucuronate) + UDP. The catalysed reaction is all-trans-4-hydroxyretinoate + UDP-alpha-D-glucuronate = all-trans-4-hydroxy-4-O-(beta-D-glucuronide)-retinoate + UDP + H(+). It catalyses the reaction (E)-ferulate + UDP-alpha-D-glucuronate = (E)-ferulic acid beta-D-glucuronate ester + UDP. It carries out the reaction 8-iso-prostaglandin F2alpha + UDP-alpha-D-glucuronate = 8-iso-prostaglandin F2alpha-glucuronide + UDP + H(+). The enzyme catalyses 5-epi-5-F2t-IsoP + UDP-alpha-D-glucuronate = 5-epi-5-F2t-IsoP-glucuronide + UDP + H(+). The catalysed reaction is (5Z,8Z,11Z,14Z)-eicosatetraenoate + UDP-alpha-D-glucuronate = O-[(5Z),(8Z),(11Z),(14Z)-eicosatetraenoyl]-beta-D-glucuronate + UDP. It catalyses the reaction 15-hydroxy-(5Z,8Z,11Z,13E)-eicosatetraenoate + UDP-alpha-D-glucuronate = 15-O-(beta-D-glucuronosyl)-(5Z,8Z,11Z,14Z)-eicosatetraenoate + UDP + H(+). It carries out the reaction 20-hydroxy-(5Z,8Z,11Z,14Z)-eicosatetraenoate + UDP-alpha-D-glucuronate = 20-O-(beta-D-glucuronosyl)-(5Z,8Z,11Z,14Z)-eicosatetraenoate + UDP + H(+). The enzyme catalyses (E)-ferulate + UDP-alpha-D-glucuronate = (E)-4-O-(beta-D-glucuronosyl)-ferulate + UDP + H(+). The catalysed reaction is prostaglandin B1 + UDP-alpha-D-glucuronate = 15-O-(beta-D-glucuronosyl)-prostaglandin B1 + UDP + H(+). It catalyses the reaction mycophenolate + UDP-alpha-D-glucuronate = mycophenolic acid O-acyl-beta-D-glucuronide + UDP. It carries out the reaction losartan + UDP-alpha-D-glucuronate = losartan-2-N-beta-D-glucuronide + UDP. The enzyme catalyses candesartan + UDP-alpha-D-glucuronate = candesartan O-beta-D-glucuronoside + UDP. The catalysed reaction is candesartan + UDP-alpha-D-glucuronate = candesartan-2-N-beta-D-glucuronide + UDP. It catalyses the reaction zolasartan + UDP-alpha-D-glucuronate = zolarsartan O-beta-D-glucuronoside + UDP. In terms of biological role, UDP-glucuronosyltransferase (UGT) that catalyzes phase II biotransformation reactions in which lipophilic substrates are conjugated with glucuronic acid to increase the metabolite's water solubility, thereby facilitating excretion into either the urine or bile. Essential for the elimination and detoxification of drugs, xenobiotics and endogenous compounds. Catalyzes the glucuronidation of endogenous steroid hormones such as androgens (epitestosterone, androsterone) and estrogens (estradiol, epiestradiol, estriol, catechol estrogens). Also regulates the levels of retinoic acid, a major metabolite of vitamin A involved in apoptosis, cellular growth and differentiation, and embryonic development. Contributes to bile acid (BA) detoxification by catalyzing the glucuronidation of BA substrates, which are natural detergents for dietary lipids absorption. Involved in the glucuronidation of arachidonic acid (AA) and AA-derived eicosanoids including 15-HETE, 20-HETE, PGE2, PGB1 and F2-isoprostanes (8-iso-PGF2alpha and 5-epi-5-F2t-IsoP). Involved in the glucuronidation of the phytochemical ferulic acid at the phenolic or the carboxylic acid group. Involved in the glucuronidation of the AGTR1 angiotensin receptor antagonist losartan, caderastan and zolarsatan, drugs which can inhibit the effect of angiotensin II. Also metabolizes mycophenolate, an immunosuppressive agent. The polypeptide is UDP-glucuronosyltransferase 2B7 (Rattus norvegicus (Rat)).